Reading from the N-terminus, the 940-residue chain is UvrABC system protein A (940 aa).

Residue 31–38 participates in ATP binding; it reads GLSGSGKS. The C4-type zinc-finger motif lies at 252 to 279; it reads CPHCGYSMQELEPRLFSFNNPAGACGTC. 2 ABC transporter domains span residues 309-586 and 606-936; these read WDQK…PDSL and RDKN…RFLK. 639–646 serves as a coordination point for ATP; the sequence is GVSGSGKS. The segment at 739 to 765 adopts a C4-type zinc-finger fold; that stretch reads CEACQGDGVIKVEMHFLPDVYVPCDVC.

This sequence belongs to the ABC transporter superfamily. UvrA family. Forms a heterotetramer with UvrB during the search for lesions.

It localises to the cytoplasm. Functionally, the UvrABC repair system catalyzes the recognition and processing of DNA lesions. UvrA is an ATPase and a DNA-binding protein. A damage recognition complex composed of 2 UvrA and 2 UvrB subunits scans DNA for abnormalities. When the presence of a lesion has been verified by UvrB, the UvrA molecules dissociate. In Vibrio vulnificus (strain CMCP6), this protein is UvrABC system protein A.